We begin with the raw amino-acid sequence, 251 residues long: Pyrroloquinoline-quinone synthase (251 aa).

This sequence belongs to the PqqC family.

It catalyses the reaction 6-(2-amino-2-carboxyethyl)-7,8-dioxo-1,2,3,4,7,8-hexahydroquinoline-2,4-dicarboxylate + 3 O2 = pyrroloquinoline quinone + 2 H2O2 + 2 H2O + H(+). Its pathway is cofactor biosynthesis; pyrroloquinoline quinone biosynthesis. Ring cyclization and eight-electron oxidation of 3a-(2-amino-2-carboxyethyl)-4,5-dioxo-4,5,6,7,8,9-hexahydroquinoline-7,9-dicarboxylic-acid to PQQ. This is Pyrroloquinoline-quinone synthase from Pseudomonas syringae pv. tomato (strain ATCC BAA-871 / DC3000).